We begin with the raw amino-acid sequence, 363 residues long: uncharacterized protein (363 aa).

The S-adenosyl-L-methionine site is built by Gln198, Tyr225, Glu246, and Asp291. Residue Cys318 is the Nucleophile of the active site.

This sequence belongs to the class I-like SAM-binding methyltransferase superfamily. RNA M5U methyltransferase family.

This is an uncharacterized protein from Mycoplasma mobile (strain ATCC 43663 / 163K / NCTC 11711) (Mesomycoplasma mobile).